A 383-amino-acid polypeptide reads, in one-letter code: tRNA-specific 2-thiouridylase MnmA (383 aa).

ATP is bound by residues glycine 9–serine 16 and methionine 35. The tract at residues asparagine 95–aspartate 97 is interaction with target base in tRNA. Catalysis depends on cysteine 100, which acts as the Nucleophile. An intrachain disulfide couples cysteine 100 to cysteine 198. Glycine 124 serves as a coordination point for ATP. The segment at lysine 148–glutamine 150 is interaction with tRNA. Cysteine 198 serves as the catalytic Cysteine persulfide intermediate. Positions arginine 310–tyrosine 311 are interaction with tRNA.

This sequence belongs to the MnmA/TRMU family.

Its subcellular location is the cytoplasm. The enzyme catalyses S-sulfanyl-L-cysteinyl-[protein] + uridine(34) in tRNA + AH2 + ATP = 2-thiouridine(34) in tRNA + L-cysteinyl-[protein] + A + AMP + diphosphate + H(+). In terms of biological role, catalyzes the 2-thiolation of uridine at the wobble position (U34) of tRNA, leading to the formation of s(2)U34. This Paraburkholderia phytofirmans (strain DSM 17436 / LMG 22146 / PsJN) (Burkholderia phytofirmans) protein is tRNA-specific 2-thiouridylase MnmA.